The chain runs to 129 residues: Glycine cleavage system H protein (129 aa).

Residues 24 to 106 (LVRVGISAFA…HGEGWLLVLR (83 aa)) form the Lipoyl-binding domain. Lys65 bears the N6-lipoyllysine mark.

The protein belongs to the GcvH family. The glycine cleavage system is composed of four proteins: P, T, L and H. (R)-lipoate is required as a cofactor.

The glycine cleavage system catalyzes the degradation of glycine. The H protein shuttles the methylamine group of glycine from the P protein to the T protein. In Synechococcus sp. (strain CC9605), this protein is Glycine cleavage system H protein.